The primary structure comprises 456 residues: Endoglucanase A (456 aa).

Positions methionine 1 to glycine 30 are cleaved as a signal peptide. The catalytic stretch occupies residues proline 31–alanine 322. Aspartate 113 is a catalytic residue. 2 cysteine pairs are disulfide-bonded: cysteine 114–cysteine 159 and cysteine 267–cysteine 302. Aspartate 151 serves as the catalytic Proton donor. Positions serine 255 to threonine 280 are disordered. Aspartate 300 acts as the Nucleophile in catalysis. Positions alanine 321–arginine 358 are disordered. Residues proline 323–proline 355 are linker ('hinge') (Pro-Ser box). The span at threonine 325–serine 338 shows a compositional bias: pro residues. The 104-residue stretch at glutamine 353–serine 456 folds into the CBM2 domain. An intrachain disulfide couples cysteine 360 to cysteine 453.

This sequence belongs to the glycosyl hydrolase 6 (cellulase B) family.

It carries out the reaction Endohydrolysis of (1-&gt;4)-beta-D-glucosidic linkages in cellulose, lichenin and cereal beta-D-glucans.. This is Endoglucanase A (celA) from Thermobispora bispora (Microbispora bispora).